The sequence spans 373 residues: ORC1-type DNA replication protein 2 (373 aa).

ATP-binding positions include 63-67, tyrosine 205, and arginine 217; that span reads TGKTS.

This sequence belongs to the CDC6/cdc18 family.

Functionally, involved in regulation of DNA replication. This is ORC1-type DNA replication protein 2 (cdc6-2) from Methanosarcina acetivorans (strain ATCC 35395 / DSM 2834 / JCM 12185 / C2A).